A 380-amino-acid polypeptide reads, in one-letter code: Chaperone protein DnaJ (380 aa).

In terms of domain architecture, J spans 5 to 72 (DYYETLGVAK…QKRAAYDQYG (68 aa)). Residues 140–218 (GKDTQIRIPS…CNGAGRIKSN (79 aa)) form a CR-type zinc finger. Residues C153, C156, C170, C173, C192, C195, C206, and C209 each contribute to the Zn(2+) site. 4 CXXCXGXG motif repeats span residues 153–160 (CSTCDGTG), 170–177 (CPTCSGSG), 192–199 (CPSCHGTG), and 206–213 (CTACNGAG). Positions 357–380 (LKKGGERHSPNAKSWTDRVKDLFK) are disordered.

It belongs to the DnaJ family. Homodimer. Zn(2+) is required as a cofactor.

Its subcellular location is the cytoplasm. Functionally, participates actively in the response to hyperosmotic and heat shock by preventing the aggregation of stress-denatured proteins and by disaggregating proteins, also in an autonomous, DnaK-independent fashion. Unfolded proteins bind initially to DnaJ; upon interaction with the DnaJ-bound protein, DnaK hydrolyzes its bound ATP, resulting in the formation of a stable complex. GrpE releases ADP from DnaK; ATP binding to DnaK triggers the release of the substrate protein, thus completing the reaction cycle. Several rounds of ATP-dependent interactions between DnaJ, DnaK and GrpE are required for fully efficient folding. Also involved, together with DnaK and GrpE, in the DNA replication of plasmids through activation of initiation proteins. The chain is Chaperone protein DnaJ from Methylibium petroleiphilum (strain ATCC BAA-1232 / LMG 22953 / PM1).